The primary structure comprises 137 residues: Large ribosomal subunit protein uL22c (137 aa).

Belongs to the universal ribosomal protein uL22 family. In terms of assembly, part of the 50S ribosomal subunit.

It localises to the plastid. It is found in the chloroplast. Its function is as follows. This protein binds specifically to 23S rRNA. The globular domain of the protein is located near the polypeptide exit tunnel on the outside of the subunit, while an extended beta-hairpin is found that lines the wall of the exit tunnel in the center of the 70S ribosome. This Oenothera argillicola (Appalachian evening primrose) protein is Large ribosomal subunit protein uL22c (rpl22).